The primary structure comprises 702 residues: Polyribonucleotide nucleotidyltransferase (702 aa).

2 residues coordinate Mg(2+): aspartate 493 and aspartate 499. The 60-residue stretch at 560–619 (PRLLTMRIDPERIRDVIGKGGATIRGLTEETGTNIDISDEGVVTIASADKAAAEEAKKRI) folds into the KH domain. The S1 motif domain maps to 629 to 697 (GKVYDGKVAK…RQGRIRLSMK (69 aa)).

Belongs to the polyribonucleotide nucleotidyltransferase family. As to quaternary structure, component of the RNA degradosome, which is a multiprotein complex involved in RNA processing and mRNA degradation. Mg(2+) is required as a cofactor.

The protein localises to the cytoplasm. The catalysed reaction is RNA(n+1) + phosphate = RNA(n) + a ribonucleoside 5'-diphosphate. Functionally, involved in mRNA degradation. Catalyzes the phosphorolysis of single-stranded polyribonucleotides processively in the 3'- to 5'-direction. This chain is Polyribonucleotide nucleotidyltransferase, found in Halorhodospira halophila (strain DSM 244 / SL1) (Ectothiorhodospira halophila (strain DSM 244 / SL1)).